Consider the following 499-residue polypeptide: FAD-dependent oxidoreductase domain-containing protein 1 (499 aa).

The chain crosses the membrane as a helical span at residues 75 to 95; it reads ERADVVIVGGGVMGWSIAYWL.

FAD serves as cofactor.

It is found in the mitochondrion inner membrane. In terms of biological role, required for the assembly of the mitochondrial membrane respiratory chain NADH dehydrogenase (Complex I). Involved in mid-late stages of complex I assembly. The protein is FAD-dependent oxidoreductase domain-containing protein 1 (foxred1) of Xenopus laevis (African clawed frog).